The primary structure comprises 217 residues: Ribonuclease HII (217 aa).

In terms of domain architecture, RNase H type-2 spans 27–216 (RTIAGIDEAG…VREHLGESRC (190 aa)). Residues aspartate 33, glutamate 34, and aspartate 125 each contribute to the a divalent metal cation site.

It belongs to the RNase HII family. The cofactor is Mn(2+). Mg(2+) is required as a cofactor.

The protein localises to the cytoplasm. The enzyme catalyses Endonucleolytic cleavage to 5'-phosphomonoester.. In terms of biological role, endonuclease that specifically degrades the RNA of RNA-DNA hybrids. The chain is Ribonuclease HII from Geobacter sulfurreducens (strain ATCC 51573 / DSM 12127 / PCA).